The primary structure comprises 98 residues: NADH-ubiquinone oxidoreductase chain 4L (98 aa).

3 helical membrane-spanning segments follow: residues 1 to 21 (MSMV…GLLI), 30 to 50 (LLCL…TILI), and 61 to 81 (IILL…LVMI).

Belongs to the complex I subunit 4L family. Core subunit of respiratory chain NADH dehydrogenase (Complex I) which is composed of 45 different subunits.

The protein resides in the mitochondrion inner membrane. The enzyme catalyses a ubiquinone + NADH + 5 H(+)(in) = a ubiquinol + NAD(+) + 4 H(+)(out). Its function is as follows. Core subunit of the mitochondrial membrane respiratory chain NADH dehydrogenase (Complex I) which catalyzes electron transfer from NADH through the respiratory chain, using ubiquinone as an electron acceptor. Part of the enzyme membrane arm which is embedded in the lipid bilayer and involved in proton translocation. This chain is NADH-ubiquinone oxidoreductase chain 4L (MT-ND4L), found in Neovison vison (American mink).